Consider the following 202-residue polypeptide: Nucleoside triphosphate pyrophosphatase (202 aa).

Catalysis depends on Asp-79, which acts as the Proton acceptor.

The protein belongs to the Maf family. It depends on a divalent metal cation as a cofactor.

It localises to the cytoplasm. It catalyses the reaction a ribonucleoside 5'-triphosphate + H2O = a ribonucleoside 5'-phosphate + diphosphate + H(+). The catalysed reaction is a 2'-deoxyribonucleoside 5'-triphosphate + H2O = a 2'-deoxyribonucleoside 5'-phosphate + diphosphate + H(+). In terms of biological role, nucleoside triphosphate pyrophosphatase. May have a dual role in cell division arrest and in preventing the incorporation of modified nucleotides into cellular nucleic acids. This is Nucleoside triphosphate pyrophosphatase from Rhodopseudomonas palustris (strain ATCC BAA-98 / CGA009).